A 419-amino-acid polypeptide reads, in one-letter code: Sulfate adenylyltransferase (419 aa).

This sequence belongs to the sulfate adenylyltransferase family.

The catalysed reaction is sulfate + ATP + H(+) = adenosine 5'-phosphosulfate + diphosphate. Its pathway is sulfur metabolism; hydrogen sulfide biosynthesis; sulfite from sulfate: step 1/3. The chain is Sulfate adenylyltransferase from Psychrobacter sp. (strain PRwf-1).